Consider the following 490-residue polypeptide: Stomatal closure-related actin-binding protein 3 (490 aa).

It belongs to the SCAB family. Expressed in roots, stems, leaves, siliques and flowers.

The protein resides in the cytoplasm. It is found in the cytoskeleton. Probable plant-specific actin binding protein that bundles and stabilizes microfilaments (MFs). The sequence is that of Stomatal closure-related actin-binding protein 3 from Arabidopsis thaliana (Mouse-ear cress).